The chain runs to 659 residues: Tetratricopeptide repeat protein 30 homolog (659 aa).

TPR repeat units lie at residues 3–36, 43–76, 143–176, 178–210, 391–424, 450–483, and 533–566; these read SQNM…LNGI, RAGL…VPDV, ATVK…GGFN, HIAY…GIRN, CRSA…RAWI, TWRL…NYDD, and CIVN…GSGA.

Belongs to the TTC30/dfy-1/fleer family.

Its subcellular location is the cell projection. It localises to the cilium. In terms of biological role, required for polyglutamylation of axonemal tubulin in sensory cilia. Plays a role in anterograde intraflagellar transport (IFT), the process by which cilia precursors are transported from the base of the cilium to the site of their incorporation at the tip. The protein is Tetratricopeptide repeat protein 30 homolog of Aedes aegypti (Yellowfever mosquito).